The primary structure comprises 138 residues: Photosystem II extrinsic protein U (138 aa).

The N-terminal stretch at 1–28 is a signal peptide; that stretch reads MSRVVSALMGLVLMFGCAFFSVQPQAQA. The propeptide occupies 29-42; sequence LDLSNGFVSAAVLG.

This sequence belongs to the PsbU family. As to quaternary structure, PSII is composed of 1 copy each of membrane proteins PsbA, PsbB, PsbC, PsbD, PsbE, PsbF, PsbH, PsbI, PsbJ, PsbK, PsbL, PsbM, PsbT, PsbX, PsbY, PsbZ, Psb30/Ycf12, peripheral proteins PsbO, CyanoQ (PsbQ), PsbU, PsbV and a large number of cofactors. It forms dimeric complexes.

Its subcellular location is the cellular thylakoid membrane. In terms of biological role, one of the extrinsic, lumenal subunits of photosystem II (PSII). PSII is a light-driven water plastoquinone oxidoreductase, using light energy to abstract electrons from H(2)O, generating a proton gradient subsequently used for ATP formation. The extrinsic proteins stabilize the structure of photosystem II oxygen-evolving complex (OEC), the ion environment of oxygen evolution and protect the OEC against heat-induced inactivation. In Picosynechococcus sp. (strain ATCC 27264 / PCC 7002 / PR-6) (Agmenellum quadruplicatum), this protein is Photosystem II extrinsic protein U.